Reading from the N-terminus, the 724-residue chain is RINT1-like protein (724 aa).

An RINT1/TIP20 domain is found at 163–724 (RLHAVQAQSL…LERRMDIKMF (562 aa)).

This sequence belongs to the RINT1 family.

During cytokinesis in male meiotic cells, required for completion of cleavage furrow ingression possibly in conjunction with Zw10. Required for maintenance of Golgi stack number and morphology. Essential for acroblast assembly. The polypeptide is RINT1-like protein (Drosophila melanogaster (Fruit fly)).